Here is a 356-residue protein sequence, read N- to C-terminus: Histidinol-phosphate aminotransferase (356 aa).

Lysine 214 is subject to N6-(pyridoxal phosphate)lysine.

The protein belongs to the class-II pyridoxal-phosphate-dependent aminotransferase family. Histidinol-phosphate aminotransferase subfamily. In terms of assembly, homodimer. Requires pyridoxal 5'-phosphate as cofactor.

The enzyme catalyses L-histidinol phosphate + 2-oxoglutarate = 3-(imidazol-4-yl)-2-oxopropyl phosphate + L-glutamate. It functions in the pathway amino-acid biosynthesis; L-histidine biosynthesis; L-histidine from 5-phospho-alpha-D-ribose 1-diphosphate: step 7/9. The sequence is that of Histidinol-phosphate aminotransferase from Shigella dysenteriae serotype 1 (strain Sd197).